The chain runs to 292 residues: CCR4-NOT transcription complex subunit 8 (292 aa).

A divalent metal cation contacts are provided by D40, E42, D161, and D230.

This sequence belongs to the CAF1 family. As to quaternary structure, component of the CCR4-NOT complex; distinct complexes seem to exist that differ in the participation of probably mutually exclusive catalytic subunits; the complex contains two deadenylase subunits, CNOT6 or CNOT6L, and CNOT7 or CNOT8. In the complex interacts directly with CNOT1. Interacts with BTG1, BTG2 and TOB1. Interacts with BTG4.

The protein resides in the cytoplasm. The protein localises to the nucleus. It catalyses the reaction Exonucleolytic cleavage of poly(A) to 5'-AMP.. Its function is as follows. Has 3'-5' poly(A) exoribonuclease activity for synthetic poly(A) RNA substrate. Its function seems to be partially redundant with that of CNOT7. Catalytic component of the CCR4-NOT complex which is linked to various cellular processes including bulk mRNA degradation, miRNA-mediated repression, translational repression during translational initiation and general transcription regulation. During miRNA-mediated repression the complex also seems to act as translational repressor during translational initiation. Additional complex functions may be a consequence of its influence on mRNA expression. Associates with members of the BTG family such as TOB1 and BTG2 and is required for their anti-proliferative activity. The protein is CCR4-NOT transcription complex subunit 8 (CNOT8) of Homo sapiens (Human).